A 108-amino-acid polypeptide reads, in one-letter code: Large ribosomal subunit protein uL24 (108 aa).

The disordered stretch occupies residues Arg-46–Gln-65. The segment covering Gln-51–Gly-61 has biased composition (low complexity).

The protein belongs to the universal ribosomal protein uL24 family. In terms of assembly, part of the 50S ribosomal subunit.

In terms of biological role, one of two assembly initiator proteins, it binds directly to the 5'-end of the 23S rRNA, where it nucleates assembly of the 50S subunit. One of the proteins that surrounds the polypeptide exit tunnel on the outside of the subunit. The protein is Large ribosomal subunit protein uL24 of Parafrankia sp. (strain EAN1pec).